The sequence spans 430 residues: Pre-B-cell leukemia transcription factor 2 (430 aa).

A disordered region spans residues Met-1–Asp-52. Residues Gly-13–Arg-48 are compositionally biased toward gly residues. In terms of domain architecture, PBC spans Arg-48–Asp-243. The interval Asp-55–Gly-134 is PBC-A. 3 positions are modified to phosphoserine: Ser-136, Ser-151, and Ser-159. The segment at Ala-137–Asp-243 is PBC-B. Residues Ala-244–Ile-306 constitute a DNA-binding region (homeobox; TALE-type). Disordered regions lie at residues Gly-327–Phe-347 and Leu-375–Asn-430. 2 positions are modified to phosphoserine: Ser-330 and Ser-395. Residues Val-409 to Thr-418 are compositionally biased toward polar residues.

It belongs to the TALE/PBX homeobox family. As to quaternary structure, forms heterodimers with MEIS1 and heterotrimers with MEIS1 and HOXA9. Interacts with PBXIP1.

The protein localises to the nucleus. In terms of biological role, transcriptional activator that binds the sequence 5'-ATCAATCAA-3'. Activates transcription of PF4 in complex with MEIS1. This chain is Pre-B-cell leukemia transcription factor 2 (Pbx2), found in Mus musculus (Mouse).